The sequence spans 284 residues: Phosphonates import ATP-binding protein PhnC 2 (284 aa).

An ABC transporter domain is found at 5-253; sequence IEVRGLSKSF…MLRDLYGTEA (249 aa). 38–45 contacts ATP; the sequence is GASGSGKS.

It belongs to the ABC transporter superfamily. Phosphonates importer (TC 3.A.1.9.1) family. As to quaternary structure, the complex is composed of two ATP-binding proteins (PhnC), two transmembrane proteins (PhnE) and a solute-binding protein (PhnD).

It is found in the cell inner membrane. It carries out the reaction phosphonate(out) + ATP + H2O = phosphonate(in) + ADP + phosphate + H(+). Functionally, part of the ABC transporter complex PhnCDE involved in phosphonates import. Responsible for energy coupling to the transport system. In Cupriavidus necator (strain ATCC 17699 / DSM 428 / KCTC 22496 / NCIMB 10442 / H16 / Stanier 337) (Ralstonia eutropha), this protein is Phosphonates import ATP-binding protein PhnC 2.